Here is a 499-residue protein sequence, read N- to C-terminus: Trichoplein keratin filament-binding protein (499 aa).

Positions 12-38 form a coiled coil; it reads SRVRTLEQQLVRQREQEARLRRQWEQH. 2 disordered regions span residues 46–78 and 169–209; these read DVRSSKQAQWSSRQSFHRSMSAFQRDRMREEKQ and VQQQ…EEEN. Residues 50 to 67 are compositionally biased toward polar residues; the sequence is SKQAQWSSRQSFHRSMSA. Composition is skewed to basic and acidic residues over residues 69-78 and 172-209; these read QRDRMREEKQ and QEKKQADERTQEEKQRFENEYERTRQEALERMRKEEEN. Coiled coils occupy residues 71–133, 168–306, and 359–484; these read DRMR…ERRK, QVQQ…ALLE, and WEKR…MIRQ. The interval 74-499 is interaction with keratin proteins; sequence REEKQRKLEE…IHSRPRSAWT (426 aa). The trichohyalin/plectin homology domain stretch occupies residues 260-426; sequence KMMEESRRKT…RLTLRLEKEQ (167 aa).

It belongs to the TCHP family.

It is found in the cytoplasm. It localises to the cytoskeleton. The protein localises to the microtubule organizing center. The protein resides in the centrosome. In terms of biological role, may act as a 'capping' or 'branching' protein for keratin filaments in the cell periphery. May regulate K8/K18 filament and desmosome organization mainly at the apical or peripheral regions of simple epithelial cells. This Danio rerio (Zebrafish) protein is Trichoplein keratin filament-binding protein.